Consider the following 533-residue polypeptide: Purine-cytosine permease FCY2 (533 aa).

Over 1–98 (MLEEGNNVYE…NAASMWFSAN (98 aa)) the chain is Cytoplasmic. Lys16 participates in a covalent cross-link: Glycyl lysine isopeptide (Lys-Gly) (interchain with G-Cter in ubiquitin). Ser18 is modified (phosphoserine). A helical transmembrane segment spans residues 99–119 (MVIASYALGALGPMVFGLNFG). Topologically, residues 120 to 121 (QS) are extracellular. A helical transmembrane segment spans residues 122 to 141 (VLVIIFFNIMGLIFVAFFSV). The Cytoplasmic portion of the chain corresponds to 142-198 (FGAELGLRQMILSRYLVGNVTARIFSLINVIACVGWGIVNTSVSAQLLNMVNEGSGH). The surface seeking stretch occupies residues 165-184 (IFSLINVIACVGWGIVNTSV). Residues 199–218 (VCPIWAGCLIIIGGTVLVTF) form a helical membrane-spanning segment. The Extracellular portion of the chain corresponds to 219–256 (FGYSVIHAYEKWSWVPNFAVFLVIIAQLSRSGKFKGGE). Residues 257 to 276 (WVGGATTAGSVLSFGSSIFG) traverse the membrane as a helical segment. Residues 277–300 (FAAGWTTYAADYTVYMPKSTNKYK) lie on the Cytoplasmic side of the membrane. A helical membrane pass occupies residues 301–320 (IFFSLVAGLAFPLFFTMILG). Residues 321-347 (AASAMAALNDPTWKAYYDKNAMGGVIY) lie on the Extracellular side of the membrane. Residues 348-367 (AILVPNSLNGFGQFCCVLLA) traverse the membrane as a helical segment. Residues 368–398 (LSTIANNIPNMYTVALSAQALWAPLAKIPRV) lie on the Cytoplasmic side of the membrane. Residues 399-418 (VWTMAGNAATLGISIPATYY) form a helical membrane-spanning segment. Residues 419-465 (FDGFMENFMDSIGYYLAIYIAISCSEHFFYRRSFSAYNIDDWDNWEH) lie on the Extracellular side of the membrane. The helical transmembrane segment at 466–485 (LPIGIAGTAALIVGAFGVAL) threads the bilayer. Over 486–533 (GMCQTYWVGEIGRLIGKYGGDIGFELGASWAFIIYNILRPLELKYFGR) the chain is Cytoplasmic.

Belongs to the purine-cytosine permease (2.A.39) family. In terms of processing, not N-glycosylated.

Its subcellular location is the membrane. Its function is as follows. This permease has a broad specificity towards purines, and also transport cytosine and 5-methylcytosine but neither uracil nor thymine. The protein is Purine-cytosine permease FCY2 (FCY2) of Saccharomyces cerevisiae (strain ATCC 204508 / S288c) (Baker's yeast).